A 117-amino-acid chain; its full sequence is Ribosome maturation factor RimP (117 aa).

The protein belongs to the RimP family.

The protein localises to the cytoplasm. Its function is as follows. Required for maturation of 30S ribosomal subunits. This is Ribosome maturation factor RimP from Rickettsia prowazekii (strain Madrid E).